The following is a 463-amino-acid chain: MAGAGERKGKKDDNGIGTAIDFVLSNARLVLGVGGAAMLGIATLAVKRMYDRAISAPTSPTRLSHSGKRSWEEPNWMGSPRLLNKDMKAGLSRSLQTLPTDSSAFDTDTFCPPRPKPLARRGQVDLKKSRLRMSLQEKLLSYYRNRAAIPAGEQARAKQAAVDICAELRSFLRAKLPDMPLRDMYLSGSLYDDLQVVTADHIQLIVPLVLEQNLWSCIPGEDTIMNVPGFFLVRRENPEYFPRGSSYWDRCVVGGYLSPKTVADTFEKVVAGSINWPAIGSLLDYVIRPAPPPEALTLEVQYEKDKHLVIDFLPSVTLGDTVLVARPHRLAQYDNLWRLSLRPAETARLRALDQADSGCRSLCLKILKAICKSTPALGHLTASQLTNVILHLAQEEADWSPDMLADRFLQALRGLISYLEAGVLPSALNPKVNLFAELTPQEIDELGYTLYCSLSEPEVLLQT.

Over 1-23 (MAGAGERKGKKDDNGIGTAIDFV) the chain is Mitochondrial intermembrane. The helical transmembrane segment at 24 to 46 (LSNARLVLGVGGAAMLGIATLAV) threads the bilayer. Residues 47-463 (KRMYDRAISA…LSEPEVLLQT (417 aa)) are Cytoplasmic-facing. Residues 49 to 195 (MYDRAISAPT…LSGSLYDDLQ (147 aa)) are dimerization. Phosphoserine occurs at positions 55, 59, 79, and 94. Positions 57–77 (PTSPTRLSHSGKRSWEEPNWM) are disordered. The interval 160 to 169 (AAVDICAELR) is important for interaction with DNM1L. Positions 187, 189, and 201 each coordinate ADP. The segment at 234 to 243 (RRENPEYFPR) is important for interaction with DNM1L. ADP-binding residues include S340, R342, and K368.

Belongs to the MID49/MID51 family. In terms of assembly, homodimer. Interacts with DNM1L.

It localises to the mitochondrion outer membrane. Its function is as follows. Mitochondrial outer membrane protein which regulates mitochondrial fission/fusion dynamics. Promotes the recruitment and association of the fission mediator dynamin-related protein 1 (DNM1L) to the mitochondrial surface independently of the mitochondrial fission FIS1 and MFF proteins. Regulates DNM1L GTPase activity and DNM1L oligomerization. Binds ADP and can also bind GDP, although with lower affinity. Does not bind CDP, UDP, ATP, AMP or GTP. Inhibits DNM1L GTPase activity in the absence of bound ADP. Requires ADP to stimulate DNM1L GTPase activity and the assembly of DNM1L into long, oligomeric tubules with a spiral pattern, as opposed to the ring-like DNM1L oligomers observed in the absence of bound ADP. Does not require ADP for its function in recruiting DNM1L. The polypeptide is Mitochondrial dynamics protein MID51 (Mief1) (Mus musculus (Mouse)).